The following is a 677-amino-acid chain: Mitochondrial disaggregase (677 aa).

Residues 1 to 57 (MMLSAVLRRTAPAPRLFLGLIKSPSLQSRGGAYNRSVITGDRGEPQRLRTAAWVRPG) constitute a mitochondrion transit peptide. Residues 64–103 (PGRGAATGGRRGERTEIPYLTAASSGRGPSPEETLPGQDS) are disordered. The interval 92-126 (PSPEETLPGQDSWNGVPNKAGLGMWALAMALVVQC) is autoinhibitory. ANK repeat units lie at residues 133–162 (NKDA…DVNA), 166–195 (LGWT…DPNL), 235–265 (KGCT…PLQR), and 268–297 (MGHT…EKQR). ATP-binding residues include histidine 316, isoleucine 318, serine 353, glycine 354, isoleucine 355, glycine 356, lysine 357, threonine 358, glutamate 425, and asparagine 466. The interval 477–505 (LQLRQEALEMSRNRIAENLGDVQISDKIT) is regulatory; slows ATPase and disaggregase activities. An ATP-binding site is contributed by arginine 531. Position 559 is an N6-acetyllysine (lysine 559). Residue arginine 590 coordinates ATP.

It belongs to the ClpA/ClpB family. As to quaternary structure, homododecamer when substrate-bound; the homododecamer consists of 2 homohexamers stacked head-to-head via ANK repeat-mediated interactions. The active substrate-bound form is likely to exist in a dynamic equilibrium between homohexamers and homododecamers. Homotetradecamer in the unbound state which is remodeled upon substrate binding into the homododecamer. Interacts with PHB and PHB2. Interacts with MAVS; the interaction is enhanced by Sendai virus infection. Post-translationally, proteolytically cleaved by protease PARL. ATP-dependent protein disaggregase activity is stimulated by PARL-mediated cleavage of the N-terminal autoinhibitory peptide.

Its subcellular location is the mitochondrion intermembrane space. It carries out the reaction ATP + H2O = ADP + phosphate + H(+). Its activity is regulated as follows. Disaggregase activity is inhibited by ADP. In terms of biological role, functions as a regulatory ATPase and participates in secretion/protein trafficking process. Has ATP-dependent protein disaggregase activity and is required to maintain the solubility of key mitochondrial proteins. Involved in mitochondrial-mediated antiviral innate immunity, activates RIG-I-mediated signal transduction and production of IFNB1 and pro-inflammatory cytokine IL6. Plays a role in granulocyte differentiation. This chain is Mitochondrial disaggregase, found in Rattus norvegicus (Rat).